Consider the following 145-residue polypeptide: 3-dehydroquinate dehydratase (145 aa).

Y24 (proton acceptor) is an active-site residue. 3 residues coordinate substrate: N75, H81, and D88. H101 acts as the Proton donor in catalysis. Residues 102-103 (IS) and R112 each bind substrate.

It belongs to the type-II 3-dehydroquinase family. As to quaternary structure, homododecamer.

The enzyme catalyses 3-dehydroquinate = 3-dehydroshikimate + H2O. The protein operates within metabolic intermediate biosynthesis; chorismate biosynthesis; chorismate from D-erythrose 4-phosphate and phosphoenolpyruvate: step 3/7. In terms of biological role, catalyzes a trans-dehydration via an enolate intermediate. This Rhizobium johnstonii (strain DSM 114642 / LMG 32736 / 3841) (Rhizobium leguminosarum bv. viciae) protein is 3-dehydroquinate dehydratase.